We begin with the raw amino-acid sequence, 288 residues long: tRNA dimethylallyltransferase (288 aa).

Position 17–24 (17–24 (GPTASGKS)) interacts with ATP. Residue 19-24 (TASGKS) participates in substrate binding.

Belongs to the IPP transferase family. In terms of assembly, monomer. Requires Mg(2+) as cofactor.

It catalyses the reaction adenosine(37) in tRNA + dimethylallyl diphosphate = N(6)-dimethylallyladenosine(37) in tRNA + diphosphate. Catalyzes the transfer of a dimethylallyl group onto the adenine at position 37 in tRNAs that read codons beginning with uridine, leading to the formation of N6-(dimethylallyl)adenosine (i(6)A). The chain is tRNA dimethylallyltransferase from Ruegeria sp. (strain TM1040) (Silicibacter sp.).